The chain runs to 111 residues: Large ribosomal subunit protein P1 (111 aa).

The disordered stretch occupies residues 75 to 111 (AAAPAAEEKAEEEKKEEEEEKKEEEVDLSGLSGMFGF). The span at 88–101 (KKEEEEEKKEEEVD) shows a compositional bias: acidic residues.

Belongs to the eukaryotic ribosomal protein P1/P2 family. As to quaternary structure, part of the 50S ribosomal subunit. Homodimer, it forms part of the ribosomal stalk which helps the ribosome interact with GTP-bound translation factors. Forms a heptameric uL10/P0(P1)2(P1)2(P1)2 complex, where uL10/P0 forms an elongated spine to which the P1 dimers bind in a sequential fashion.

Its function is as follows. Forms part of the ribosomal stalk, playing a central role in the interaction of the ribosome with GTP-bound translation factors. The polypeptide is Large ribosomal subunit protein P1 (Aeropyrum pernix (strain ATCC 700893 / DSM 11879 / JCM 9820 / NBRC 100138 / K1)).